Reading from the N-terminus, the 543-residue chain is Chaperonin GroEL (543 aa).

ATP contacts are provided by residues 29–32 (TIGP), 86–90 (DGTTT), glycine 413, 478–480 (NAA), and aspartate 494.

Belongs to the chaperonin (HSP60) family. As to quaternary structure, forms a cylinder of 14 subunits composed of two heptameric rings stacked back-to-back. Interacts with the co-chaperonin GroES.

It localises to the cytoplasm. The enzyme catalyses ATP + H2O + a folded polypeptide = ADP + phosphate + an unfolded polypeptide.. In terms of biological role, together with its co-chaperonin GroES, plays an essential role in assisting protein folding. The GroEL-GroES system forms a nano-cage that allows encapsulation of the non-native substrate proteins and provides a physical environment optimized to promote and accelerate protein folding. The sequence is that of Chaperonin GroEL from Limosilactobacillus fermentum (strain NBRC 3956 / LMG 18251) (Lactobacillus fermentum).